Consider the following 1391-residue polypeptide: DNA-directed RNA polymerase subunit beta (1391 aa).

It belongs to the RNA polymerase beta chain family. As to quaternary structure, the RNAP catalytic core consists of 2 alpha, 1 beta, 1 beta' and 1 omega subunit. When a sigma factor is associated with the core the holoenzyme is formed, which can initiate transcription.

It carries out the reaction RNA(n) + a ribonucleoside 5'-triphosphate = RNA(n+1) + diphosphate. In terms of biological role, DNA-dependent RNA polymerase catalyzes the transcription of DNA into RNA using the four ribonucleoside triphosphates as substrates. The sequence is that of DNA-directed RNA polymerase subunit beta from Mycoplasma pneumoniae (strain ATCC 29342 / M129 / Subtype 1) (Mycoplasmoides pneumoniae).